The chain runs to 424 residues: Histidine--tRNA ligase (424 aa).

The protein belongs to the class-II aminoacyl-tRNA synthetase family. Homodimer.

It localises to the cytoplasm. It carries out the reaction tRNA(His) + L-histidine + ATP = L-histidyl-tRNA(His) + AMP + diphosphate + H(+). The protein is Histidine--tRNA ligase of Shewanella denitrificans (strain OS217 / ATCC BAA-1090 / DSM 15013).